Consider the following 26-residue polypeptide: uncharacterized protein (26 aa).

Its subcellular location is the plastid. The protein localises to the chloroplast. This is an uncharacterized protein from Trieres chinensis (Marine centric diatom).